A 106-amino-acid polypeptide reads, in one-letter code: Toxin-like structure LSTX-D9 (106 aa).

The signal sequence occupies residues 1 to 20 (MMKVLVVVALLLTLIIYSSS). The propeptide occupies 21 to 41 (DGIDDLEADELVSLMAHEQTR). Cystine bridges form between Cys45–Cys60, Cys52–Cys69, Cys59–Cys85, and Cys71–Cys83.

Belongs to the neurotoxin 19 (CSTX) family. 02 (D7) subfamily. Expressed by the venom gland.

It localises to the secreted. This Lycosa singoriensis (Wolf spider) protein is Toxin-like structure LSTX-D9.